We begin with the raw amino-acid sequence, 302 residues long: DDRGK domain-containing protein 1 (302 aa).

Over 1-5 (MDGGG) the chain is Lumenal. Residues 6–26 (GMLGAVVCLLLVFAIFPLLLW) form a helical membrane-spanning segment. Over 27–302 (RRRSDAAHRL…DENAAAGTEL (276 aa)) the chain is Cytoplasmic. 2 disordered regions span residues 36-151 (LPPQ…EEAR) and 279-302 (DLEPKPQYNEESNLDENAAAGTEL). Residues 79–91 (VDDADSDLEEEIQ) show a composition bias toward acidic residues. The segment covering 103-151 (KRQDREAQRQAEEAARDSRRTKQDRYAEMRRKKDEEREAQERLMEEEAR) has biased composition (basic and acidic residues).

It belongs to the DDRGK1 family.

It localises to the endoplasmic reticulum membrane. Its function is as follows. Substrate adapter for ufmylation, the covalent attachment of the ubiquitin-like modifier UFM1 to substrate proteins. The polypeptide is DDRGK domain-containing protein 1 (Oryza sativa subsp. japonica (Rice)).